The chain runs to 144 residues: Small ribosomal subunit protein eS19B (144 aa).

It belongs to the eukaryotic ribosomal protein eS19 family. Component of the small ribosomal subunit (SSU). Mature yeast ribosomes consist of a small (40S) and a large (60S) subunit. The 40S small subunit contains 1 molecule of ribosomal RNA (18S rRNA) and 33 different proteins (encoded by 57 genes). The large 60S subunit contains 3 rRNA molecules (25S, 5.8S and 5S rRNA) and 46 different proteins (encoded by 81 genes).

It localises to the cytoplasm. In terms of biological role, component of the ribosome, a large ribonucleoprotein complex responsible for the synthesis of proteins in the cell. The small ribosomal subunit (SSU) binds messenger RNAs (mRNAs) and translates the encoded message by selecting cognate aminoacyl-transfer RNA (tRNA) molecules. The large subunit (LSU) contains the ribosomal catalytic site termed the peptidyl transferase center (PTC), which catalyzes the formation of peptide bonds, thereby polymerizing the amino acids delivered by tRNAs into a polypeptide chain. The nascent polypeptides leave the ribosome through a tunnel in the LSU and interact with protein factors that function in enzymatic processing, targeting, and the membrane insertion of nascent chains at the exit of the ribosomal tunnel. eS19 is required for proper maturation of the small (40S) ribosomal subunit. Binds to 40S pre-ribosomal particles, probably required after association of NOC4 but before association of ENP1, TSR1 and RIO2 with 20/21S pre-rRNA. Required for proper maturation of the small (40S) ribosomal subunit. Binds to 40s pre-ribosomal particles, probably required after association of NOC4 but before association of ENP1, TSR1 and RIO2 with 20/21S pre-rRNA. The chain is Small ribosomal subunit protein eS19B from Saccharomyces cerevisiae (strain ATCC 204508 / S288c) (Baker's yeast).